Consider the following 105-residue polypeptide: Thioredoxin (105 aa).

Positions 1-105 constitute a Thioredoxin domain; sequence MASNVTDKSF…SLIEWINNNI (105 aa). Cysteine 30 and cysteine 33 form a disulfide bridge.

It belongs to the thioredoxin family.

In terms of biological role, component of the thioredoxin-thioredoxin reductase system. Participates in various redox reactions through the reversible oxidation of its active center dithiol to a disulfide and catalyzes dithiol-disulfide exchange reactions. In Rickettsia bellii (strain RML369-C), this protein is Thioredoxin (trxA).